The chain runs to 700 residues: Polyphosphate kinase (700 aa).

Asparagine 45 is an ATP binding site. Residues arginine 373 and arginine 403 each coordinate Mg(2+). Residues 428–462 (PGMKIHAKLLLITRREEQGFVRYAHIGTGNFHERT) form the PLD phosphodiesterase 1 domain. The active-site Phosphohistidine intermediate is histidine 433. 3 residues coordinate ATP: tyrosine 466, arginine 562, and histidine 590. A PLD phosphodiesterase 2 domain is found at 585–615 (DRFLEHPRVLVVHNDGDPQVFISSADWMERN).

This sequence belongs to the polyphosphate kinase 1 (PPK1) family. Mg(2+) serves as cofactor. Post-translationally, an intermediate of this reaction is the autophosphorylated ppk in which a phosphate is covalently linked to a histidine residue through a N-P bond.

It catalyses the reaction [phosphate](n) + ATP = [phosphate](n+1) + ADP. Its function is as follows. Catalyzes the reversible transfer of the terminal phosphate of ATP to form a long-chain polyphosphate (polyP). The protein is Polyphosphate kinase of Vibrio vulnificus (strain YJ016).